A 251-amino-acid polypeptide reads, in one-letter code: Elongator complex protein 6 (251 aa).

Belongs to the ELP6 family. In terms of assembly, component of the elongator complex composed of Elp1, Elp2, Elp3, Elp4, Elp5 and Elp6. The elongator complex associates with and stabilizes microtubules; efficient interaction requires the full complex. Interacts with InR/Insulin-like receptor; the interaction may stabilize Elp6.

The protein localises to the cytoplasm. It is found in the nucleus. Its subcellular location is the cytoskeleton. It localises to the spindle. Its pathway is tRNA modification; 5-methoxycarbonylmethyl-2-thiouridine-tRNA biosynthesis. Its function is as follows. Component of the elongator complex, which is required for multiple tRNA modifications, including mcm5U (5-methoxycarbonylmethyl uridine), mcm5s2U (5-methoxycarbonylmethyl-2-thiouridine), and ncm5U (5-carbamoylmethyl uridine). The elongator complex catalyzes formation of carboxymethyluridine in the wobble base at position 34 in tRNAs. Binding by the elongator complex stabilizes microtubules and promotes their growth. This induces central spindle asymmetry, promoting polarized signaling endosome trafficking during asymmetric cell division and cell fate assignation of sensory organ precursor cells. Required in germ line cells for microtubule organization involved in oocyte polarization and chromosome organization. Involved in InR-TOR (insulin-like receptor-target of rapamycin) signaling regulation of cellular metabolism, autophagy and apoptosis. This is Elongator complex protein 6 from Drosophila melanogaster (Fruit fly).